The primary structure comprises 466 residues: Glutamate--tRNA ligase 1 (466 aa).

Residues 10 to 20 (PSPTGLIHLGN) carry the 'HIGH' region motif. Zn(2+) contacts are provided by cysteine 103, cysteine 105, cysteine 130, and histidine 132. The 'KMSKS' region signature appears at 247–251 (PLSKR). An ATP-binding site is contributed by lysine 250.

The protein belongs to the class-I aminoacyl-tRNA synthetase family. Glutamate--tRNA ligase type 1 subfamily. As to quaternary structure, monomer. Zn(2+) serves as cofactor.

It localises to the cytoplasm. It carries out the reaction tRNA(Glu) + L-glutamate + ATP = L-glutamyl-tRNA(Glu) + AMP + diphosphate. Catalyzes the attachment of glutamate to tRNA(Glu) in a two-step reaction: glutamate is first activated by ATP to form Glu-AMP and then transferred to the acceptor end of tRNA(Glu). This is Glutamate--tRNA ligase 1 from Methylococcus capsulatus (strain ATCC 33009 / NCIMB 11132 / Bath).